The chain runs to 605 residues: Alanine--tRNA ligase (605 aa).

Zn(2+)-binding residues include H463, H467, C565, and H569.

It belongs to the class-II aminoacyl-tRNA synthetase family. Zn(2+) is required as a cofactor.

It is found in the cytoplasm. It carries out the reaction tRNA(Ala) + L-alanine + ATP = L-alanyl-tRNA(Ala) + AMP + diphosphate. In terms of biological role, catalyzes the attachment of alanine to tRNA(Ala) in a two-step reaction: alanine is first activated by ATP to form Ala-AMP and then transferred to the acceptor end of tRNA(Ala). Also edits incorrectly charged Ser-tRNA(Ala) and Gly-tRNA(Ala) via its editing domain. The chain is Alanine--tRNA ligase (alaS) from Treponema pallidum (strain Nichols).